The sequence spans 290 residues: Small ribosomal subunit biogenesis GTPase RsgA (290 aa).

One can recognise a CP-type G domain in the interval 62 to 213 (KNSLVRPPIV…IADTPGFSSL (152 aa)). Residues 111–114 (SKLD) and 156–164 (GQTGVGKST) contribute to the GTP site. 4 residues coordinate Zn(2+): Cys-237, Cys-242, His-244, and Cys-250.

It belongs to the TRAFAC class YlqF/YawG GTPase family. RsgA subfamily. As to quaternary structure, monomer. Associates with 30S ribosomal subunit, binds 16S rRNA. Zn(2+) serves as cofactor.

It localises to the cytoplasm. In terms of biological role, one of several proteins that assist in the late maturation steps of the functional core of the 30S ribosomal subunit. Helps release RbfA from mature subunits. May play a role in the assembly of ribosomal proteins into the subunit. Circularly permuted GTPase that catalyzes slow GTP hydrolysis, GTPase activity is stimulated by the 30S ribosomal subunit. The chain is Small ribosomal subunit biogenesis GTPase RsgA from Streptococcus agalactiae serotype V (strain ATCC BAA-611 / 2603 V/R).